The sequence spans 206 residues: Large ribosomal subunit protein uL4 (206 aa).

The interval 65–85 (KQKGSGGARHGDRKAPQFRGG) is disordered.

This sequence belongs to the universal ribosomal protein uL4 family. As to quaternary structure, part of the 50S ribosomal subunit.

In terms of biological role, one of the primary rRNA binding proteins, this protein initially binds near the 5'-end of the 23S rRNA. It is important during the early stages of 50S assembly. It makes multiple contacts with different domains of the 23S rRNA in the assembled 50S subunit and ribosome. Its function is as follows. Forms part of the polypeptide exit tunnel. In Parvibaculum lavamentivorans (strain DS-1 / DSM 13023 / NCIMB 13966), this protein is Large ribosomal subunit protein uL4.